The primary structure comprises 436 residues: Serine hydroxymethyltransferase (436 aa).

(6S)-5,6,7,8-tetrahydrofolate-binding positions include L133 and 137–139 (GHI). The residue at position 242 (K242) is an N6-(pyridoxal phosphate)lysine.

The protein belongs to the SHMT family. As to quaternary structure, homodimer. It depends on pyridoxal 5'-phosphate as a cofactor.

The protein resides in the cytoplasm. The enzyme catalyses (6R)-5,10-methylene-5,6,7,8-tetrahydrofolate + glycine + H2O = (6S)-5,6,7,8-tetrahydrofolate + L-serine. The protein operates within one-carbon metabolism; tetrahydrofolate interconversion. Its pathway is amino-acid biosynthesis; glycine biosynthesis; glycine from L-serine: step 1/1. Its function is as follows. Catalyzes the reversible interconversion of serine and glycine with tetrahydrofolate (THF) serving as the one-carbon carrier. This reaction serves as the major source of one-carbon groups required for the biosynthesis of purines, thymidylate, methionine, and other important biomolecules. Also exhibits THF-independent aldolase activity toward beta-hydroxyamino acids, producing glycine and aldehydes, via a retro-aldol mechanism. In Pelagibacter ubique (strain HTCC1062), this protein is Serine hydroxymethyltransferase.